The following is a 342-amino-acid chain: Probable dual-specificity RNA methyltransferase RlmN (342 aa).

Glutamate 91 functions as the Proton acceptor in the catalytic mechanism. Residues 97-327 (YKHGNSICVS…TTIRREMGAD (231 aa)) enclose the Radical SAM core domain. Cysteine 104 and cysteine 332 are disulfide-bonded. Positions 111, 115, and 118 each coordinate [4Fe-4S] cluster. S-adenosyl-L-methionine contacts are provided by residues 158–159 (GE), serine 190, 213–215 (SLH), and asparagine 289. The active-site S-methylcysteine intermediate is the cysteine 332.

This sequence belongs to the radical SAM superfamily. RlmN family. The cofactor is [4Fe-4S] cluster.

It is found in the cytoplasm. It carries out the reaction adenosine(2503) in 23S rRNA + 2 reduced [2Fe-2S]-[ferredoxin] + 2 S-adenosyl-L-methionine = 2-methyladenosine(2503) in 23S rRNA + 5'-deoxyadenosine + L-methionine + 2 oxidized [2Fe-2S]-[ferredoxin] + S-adenosyl-L-homocysteine. The catalysed reaction is adenosine(37) in tRNA + 2 reduced [2Fe-2S]-[ferredoxin] + 2 S-adenosyl-L-methionine = 2-methyladenosine(37) in tRNA + 5'-deoxyadenosine + L-methionine + 2 oxidized [2Fe-2S]-[ferredoxin] + S-adenosyl-L-homocysteine. Specifically methylates position 2 of adenine 2503 in 23S rRNA and position 2 of adenine 37 in tRNAs. This Clostridium botulinum (strain Langeland / NCTC 10281 / Type F) protein is Probable dual-specificity RNA methyltransferase RlmN.